An 82-amino-acid chain; its full sequence is uncharacterized protein (82 aa).

This is an uncharacterized protein from Ictaluridae (bullhead catfishes).